We begin with the raw amino-acid sequence, 663 residues long: MNFRYNHTPFGYKRRQTREVKVGDVKIGGNNPIVIQSMINSDTTDTKGTVKQILELERTGCEIVRFTVPSQVDADNLPSIRQELKKAGSKIPLVADIHFTPSVAMKAVEYVEKVRINPGNFADKKKFAVRDYTDSEYDEELERISAIFSPLVLRCKELGVSMRIGTNHGSLSDRIMNRYGDTPQGMVESALEFIRIAESLNYYDIVVSMKASNPQVMVQAYRMLASRFNELKMDYPLHLGVTEAGDGKDGRIKSAIGIGSLLEDGLGDTIRVSLTEDPVLEIPVARLLAEKFNKRIVKPEPVRGYSEFRNPFTYERFYSSEIKVGTFEAGENHPVRVETVLPFENSNSFLANIAKLYQYGKSFSIEPESILIDSPSPDQLKEISEAAAALSIPVGILLGKNVSLNEKLQNELRGFPKVVFDPFLQFQDGKKMLSFLQERQNAGLYTEIHTSGAKIESFKGLPETLSEIGIKNVLFSIESKEILYDYRKLGSILSQHEFPILLHGSFSNPEEALYDSAIGIGGLLIDGIGDLIRIKTPKMKDIEEIFQLSYDLLQGTRLRLTKTEYISCPSCGRTLFNLQETTARIKSRTGHLKGVKIAVMGCIVNGPGEMADADFGYVGAGPGKVHLYRGKEIVMKNVPSEVADEKLVELIKKHGLWQDVINV.

Residues C568, C571, C602, and E609 each coordinate [4Fe-4S] cluster.

The protein belongs to the IspG family. The cofactor is [4Fe-4S] cluster.

It catalyses the reaction (2E)-4-hydroxy-3-methylbut-2-enyl diphosphate + oxidized [flavodoxin] + H2O + 2 H(+) = 2-C-methyl-D-erythritol 2,4-cyclic diphosphate + reduced [flavodoxin]. It participates in isoprenoid biosynthesis; isopentenyl diphosphate biosynthesis via DXP pathway; isopentenyl diphosphate from 1-deoxy-D-xylulose 5-phosphate: step 5/6. Functionally, converts 2C-methyl-D-erythritol 2,4-cyclodiphosphate (ME-2,4cPP) into 1-hydroxy-2-methyl-2-(E)-butenyl 4-diphosphate. The sequence is that of 4-hydroxy-3-methylbut-2-en-1-yl diphosphate synthase (flavodoxin) from Leptospira borgpetersenii serovar Hardjo-bovis (strain L550).